A 169-amino-acid chain; its full sequence is Cell division inhibitor SulA (169 aa).

The tract at residues 106-112 (ALRTGNY) is ftsZ binding. A lon protease binding region spans residues 162 to 169 (KIHSNLYH).

It belongs to the SulA family. In terms of assembly, interacts with FtsZ. Is rapidly cleaved and degraded by the Lon protease once DNA damage is repaired.

In terms of biological role, component of the SOS system and an inhibitor of cell division. Accumulation of SulA causes rapid cessation of cell division and the appearance of long, non-septate filaments. In the presence of GTP, binds a polymerization-competent form of FtsZ in a 1:1 ratio, thus inhibiting FtsZ polymerization and therefore preventing it from participating in the assembly of the Z ring. This mechanism prevents the premature segregation of damaged DNA to daughter cells during cell division. This Shigella boydii serotype 4 (strain Sb227) protein is Cell division inhibitor SulA.